The following is a 158-amino-acid chain: NAD(P)H-quinone oxidoreductase subunit J, chloroplastic (158 aa).

The protein belongs to the complex I 30 kDa subunit family. In terms of assembly, NDH is composed of at least 16 different subunits, 5 of which are encoded in the nucleus.

It is found in the plastid. The protein resides in the chloroplast thylakoid membrane. The enzyme catalyses a plastoquinone + NADH + (n+1) H(+)(in) = a plastoquinol + NAD(+) + n H(+)(out). The catalysed reaction is a plastoquinone + NADPH + (n+1) H(+)(in) = a plastoquinol + NADP(+) + n H(+)(out). NDH shuttles electrons from NAD(P)H:plastoquinone, via FMN and iron-sulfur (Fe-S) centers, to quinones in the photosynthetic chain and possibly in a chloroplast respiratory chain. The immediate electron acceptor for the enzyme in this species is believed to be plastoquinone. Couples the redox reaction to proton translocation, and thus conserves the redox energy in a proton gradient. The chain is NAD(P)H-quinone oxidoreductase subunit J, chloroplastic from Panax ginseng (Korean ginseng).